The chain runs to 428 residues: Histidine--tRNA ligase (428 aa).

This sequence belongs to the class-II aminoacyl-tRNA synthetase family. As to quaternary structure, homodimer.

Its subcellular location is the cytoplasm. The enzyme catalyses tRNA(His) + L-histidine + ATP = L-histidyl-tRNA(His) + AMP + diphosphate + H(+). This chain is Histidine--tRNA ligase, found in Chlamydia trachomatis serovar L2 (strain ATCC VR-902B / DSM 19102 / 434/Bu).